The following is a 335-amino-acid chain: Vitamin B12 import system permease protein BtuC (335 aa).

Transmembrane regions (helical) follow at residues 25 to 45 (LVVM…VWIW), 67 to 87 (MAVI…QALF), 94 to 113 (PGLL…AVLL), 117 to 139 (LLPI…SILL), 153 to 173 (LLVG…AVYF), 243 to 263 (VLAI…ISFI), 281 to 301 (RLLA…DVVA), and 309 to 329 (ELPI…WLLI).

The protein belongs to the binding-protein-dependent transport system permease family. FecCD subfamily. In terms of assembly, the complex is composed of two ATP-binding proteins (BtuD), two transmembrane proteins (BtuC) and a solute-binding protein (BtuF).

The protein localises to the cell inner membrane. Functionally, part of the ABC transporter complex BtuCDF involved in vitamin B12 import. Involved in the translocation of the substrate across the membrane. This is Vitamin B12 import system permease protein BtuC from Yersinia pseudotuberculosis serotype O:1b (strain IP 31758).